Consider the following 340-residue polypeptide: Uroporphyrinogen decarboxylase (340 aa).

Substrate is bound by residues 21–25 (RQAGR), aspartate 71, tyrosine 147, serine 202, and histidine 316.

It belongs to the uroporphyrinogen decarboxylase family. Homodimer.

Its subcellular location is the cytoplasm. It carries out the reaction uroporphyrinogen III + 4 H(+) = coproporphyrinogen III + 4 CO2. The protein operates within porphyrin-containing compound metabolism; protoporphyrin-IX biosynthesis; coproporphyrinogen-III from 5-aminolevulinate: step 4/4. Catalyzes the decarboxylation of four acetate groups of uroporphyrinogen-III to yield coproporphyrinogen-III. This Nitratiruptor sp. (strain SB155-2) protein is Uroporphyrinogen decarboxylase.